The sequence spans 461 residues: A-type ATP synthase subunit B (461 aa).

Belongs to the ATPase alpha/beta chains family. Has multiple subunits with at least A(3), B(3), C, D, E, F, H, I and proteolipid K(x).

The protein resides in the cell membrane. Its function is as follows. Component of the A-type ATP synthase that produces ATP from ADP in the presence of a proton gradient across the membrane. The B chain is a regulatory subunit. The protein is A-type ATP synthase subunit B of Methanoculleus marisnigri (strain ATCC 35101 / DSM 1498 / JR1).